A 497-amino-acid chain; its full sequence is Galactose-1-phosphate uridylyltransferase (497 aa).

This sequence belongs to the galactose-1-phosphate uridylyltransferase type 2 family.

It is found in the cytoplasm. The enzyme catalyses alpha-D-galactose 1-phosphate + UDP-alpha-D-glucose = alpha-D-glucose 1-phosphate + UDP-alpha-D-galactose. The protein operates within carbohydrate metabolism; galactose metabolism. This chain is Galactose-1-phosphate uridylyltransferase, found in Clostridium acetobutylicum (strain ATCC 824 / DSM 792 / JCM 1419 / IAM 19013 / LMG 5710 / NBRC 13948 / NRRL B-527 / VKM B-1787 / 2291 / W).